The chain runs to 361 residues: Methylthioribose-1-phosphate isomerase (361 aa).

Aspartate 245 functions as the Proton donor in the catalytic mechanism.

This sequence belongs to the eIF-2B alpha/beta/delta subunits family. MtnA subfamily.

The protein resides in the cytoplasm. It localises to the nucleus. The enzyme catalyses 5-(methylsulfanyl)-alpha-D-ribose 1-phosphate = 5-(methylsulfanyl)-D-ribulose 1-phosphate. Its pathway is amino-acid biosynthesis; L-methionine biosynthesis via salvage pathway; L-methionine from S-methyl-5-thio-alpha-D-ribose 1-phosphate: step 1/6. Its function is as follows. Catalyzes the interconversion of methylthioribose-1-phosphate (MTR-1-P) into methylthioribulose-1-phosphate (MTRu-1-P). The sequence is that of Methylthioribose-1-phosphate isomerase from Monosiga brevicollis (Choanoflagellate).